The sequence spans 500 residues: MGEVVNLSLSQRANHVLTHLYNNQESHIPYKKNQPVNFFNNVFLSTSKTHTGHTNYAPRALVFDLRYGLGSLNKHEYHETPTNFDNIPQSDRFNLDKQIAKNQYQQNLDKGIASTEAESILSVENTKFWTDYNKLIYSPSSLNTLQNYDIGQSPEYGSHHNFPQIKFNTFEVGQKEFSDSTSNLDSQLDSFRRLLEQCDLLQGVNVVSELDSAWGGFTTSLLTEFIDEYFNGGISNTKNSIWIYGLHSQGPSGRSSINEAISRIKTTIELSKNSTLFFPINTAPFSKGIFSSDTIEDNILRGEHERKIVNDIKLKSIDSSKVTDINSLGSIISNVDISAYYNMSAPKPQDSSSGYIDLSVPTTVPTKTSSKVINEYFVKNYVIPTEQGKLEEKFAFKDKGIPSNVYRSRDITSIIKVDTFPYKIFNSQKQFNFYSEFNVSTDYRIELKAYKDLIKNVRLNSQQLMGIIEDKAELIEDISHILEHYTISNEPSDEESDDDY.

This sequence belongs to the misato family.

The protein resides in the mitochondrion. Involved in the partitioning of the mitochondrial organelle and mitochondrial DNA (mtDNA) inheritance. This chain is Protein DML1 (DML1), found in Scheffersomyces stipitis (strain ATCC 58785 / CBS 6054 / NBRC 10063 / NRRL Y-11545) (Yeast).